The sequence spans 231 residues: MGNSVMEKIKGGLVVSCQALEDEPLHSAFIMSKMALAAVQGGAVGIRANTAKDIRAIQSEIDVPIIGIYKKDYDDSDVFITPTLKEVREICETGVEIVAMDATTRKRPHNEDLKDILNAIRKEFPNTLFMADTGSIEDVYYADSLGFDLIGTTLYGYTEETANKNISDDDFSHLKEVLKSTKRPVIAEGKIDSPSKARQVLTLGCYAVVVGGAVTRPQEITTRFTNEIKKI.

Belongs to the NanE family.

It carries out the reaction an N-acyl-D-glucosamine 6-phosphate = an N-acyl-D-mannosamine 6-phosphate. It participates in amino-sugar metabolism; N-acetylneuraminate degradation; D-fructose 6-phosphate from N-acetylneuraminate: step 3/5. In terms of biological role, converts N-acetylmannosamine-6-phosphate (ManNAc-6-P) to N-acetylglucosamine-6-phosphate (GlcNAc-6-P). The chain is Putative N-acetylmannosamine-6-phosphate 2-epimerase from Listeria monocytogenes serotype 4b (strain CLIP80459).